Consider the following 264-residue polypeptide: Flagellar brake protein YcgR 1 (264 aa).

Positions 132–249 constitute a PilZ domain; sequence QRREFFRLES…RLAMIERYIA (118 aa).

The protein belongs to the YcgR family. In terms of assembly, monomer. Interacts with the flagellar basal bodies.

The protein localises to the bacterial flagellum basal body. Its function is as follows. Acts as a flagellar brake, regulating swimming and swarming in a bis-(3'-5') cyclic diguanylic acid (c-di-GMP)-dependent manner. Binds 1 c-di-GMP dimer per subunit. Increasing levels of c-di-GMP lead to decreased motility. This chain is Flagellar brake protein YcgR 1, found in Dechloromonas aromatica (strain RCB).